We begin with the raw amino-acid sequence, 573 residues long: Glutamate--tRNA ligase (573 aa).

The short motif at 106 to 116 (PNPDGAFHLGN) is the 'HIGH' region element.

It belongs to the class-I aminoacyl-tRNA synthetase family. Glutamate--tRNA ligase type 2 subfamily.

The protein localises to the cytoplasm. The catalysed reaction is tRNA(Glu) + L-glutamate + ATP = L-glutamyl-tRNA(Glu) + AMP + diphosphate. Functionally, catalyzes the attachment of glutamate to tRNA(Glu) in a two-step reaction: glutamate is first activated by ATP to form Glu-AMP and then transferred to the acceptor end of tRNA(Glu). In Thermococcus onnurineus (strain NA1), this protein is Glutamate--tRNA ligase.